Consider the following 441-residue polypeptide: Putative F-box/FBD/LRR-repeat protein At4g00315 (441 aa).

The region spanning 1-47 is the F-box domain; the sequence is MDKTSQLPDELLVKVLSFLPTKDAVRTSLLSMRWKSLWMWLPKLEYD. LRR repeat units lie at residues 57–82, 87–115, 137–164, 165–190, 211–236, 243–271, 293–318, and 319–344; these read QGLA…SLKL, IGSI…SLKL, ILKL…FLGR, VTYS…VVER, LKMS…KVTD, SDNE…DFVL, LGVY…KICS, and CDSD…EAYV. Residues 358 to 410 enclose the FBD domain; the sequence is QWGNQLNCVPKCLLSSLETFKWSEMYGLLQNQMDVAKYILRNARCLKSATIFF.

The chain is Putative F-box/FBD/LRR-repeat protein At4g00315 from Arabidopsis thaliana (Mouse-ear cress).